Consider the following 388-residue polypeptide: MNLHEYQAKELLAGYGLPVQGGILAHNGEEAAAAYDKLGGKFAVVKAQVHAGGRGKAGGVKVVKSREEAKEVAESLIGTNLVTYQTDANGQPVNSVLVCEDMYPVQTELYLGAVVDRSTRRITFMASTEGGVEIEKVAAETPEKIFKVTVDPLVGLQPCQAREVAFQLGLKDKQINEFVKLMTGAYKAFVENDFALFEVNPLAVRENGALACVDGKIGIDSNALYRLPKIAELRDKSQENERELKASEFDLNYVALEGNIGCMVNGAGLAMATMDIIKLKGGQPANFLDVGGGATKDRVVEAFKLILEDKSVQGVLINIFGGIVRCDMIAEAIVAAVKEINVDVPVVVRLEGNNAELGAKILNESGLKLTSADGLNDAAEKIVAAVNA.

One can recognise an ATP-grasp domain in the interval 9 to 245; that stretch reads KELLAGYGLP…KSQENERELK (237 aa). Residues Lys46, 53–55, Glu100, Tyr103, and Glu108 each bind ATP; that span reads GRG. Mg(2+)-binding residues include Asn200 and Asp214. Substrate is bound by residues Asn265 and 322–324; that span reads GIV.

Belongs to the succinate/malate CoA ligase beta subunit family. In terms of assembly, heterotetramer of two alpha and two beta subunits. Requires Mg(2+) as cofactor.

It carries out the reaction succinate + ATP + CoA = succinyl-CoA + ADP + phosphate. The enzyme catalyses GTP + succinate + CoA = succinyl-CoA + GDP + phosphate. It functions in the pathway carbohydrate metabolism; tricarboxylic acid cycle; succinate from succinyl-CoA (ligase route): step 1/1. Functionally, succinyl-CoA synthetase functions in the citric acid cycle (TCA), coupling the hydrolysis of succinyl-CoA to the synthesis of either ATP or GTP and thus represents the only step of substrate-level phosphorylation in the TCA. The beta subunit provides nucleotide specificity of the enzyme and binds the substrate succinate, while the binding sites for coenzyme A and phosphate are found in the alpha subunit. The protein is Succinate--CoA ligase [ADP-forming] subunit beta of Neisseria meningitidis serogroup C / serotype 2a (strain ATCC 700532 / DSM 15464 / FAM18).